The sequence spans 388 residues: Putative F-box/kelch-repeat protein At2g29820 (388 aa).

The segment at 6-33 is disordered; that stretch reads EILDGPNGDDPNNNPQEGEDNQNENPQE. Low complexity predominate over residues 9 to 21; sequence DGPNGDDPNNNPQ. Acidic residues predominate over residues 22-33; that stretch reads EGEDNQNENPQE. One can recognise an F-box domain in the interval 38-84; sequence LRNLLELPEELIERLIAHIPRCYYPYISLVSRDFRQVITSDKLFRTR. 2 Kelch repeats span residues 140–187 and 189–233; these read KMYV…EIGG and IYVI…FSTY.

This is Putative F-box/kelch-repeat protein At2g29820 from Arabidopsis thaliana (Mouse-ear cress).